Reading from the N-terminus, the 511-residue chain is L-arabinose isomerase (511 aa).

Mn(2+)-binding residues include Glu316, Glu343, His360, and His459.

Belongs to the arabinose isomerase family. Mn(2+) serves as cofactor.

It carries out the reaction beta-L-arabinopyranose = L-ribulose. It participates in carbohydrate degradation; L-arabinose degradation via L-ribulose; D-xylulose 5-phosphate from L-arabinose (bacterial route): step 1/3. Catalyzes the conversion of L-arabinose to L-ribulose. The protein is L-arabinose isomerase of Arthrobacter sp. (strain FB24).